Here is a 480-residue protein sequence, read N- to C-terminus: Membrane-bound lytic murein transglycosylase F (480 aa).

The first 15 residues, 1–15, serve as a signal peptide directing secretion; it reads MKKLLFVLLTITLLA. The interval 16–259 is non-LT domain; sequence SCQKVSVEQT…HLNEKYFAHV (244 aa). The LT domain stretch occupies residues 260-480; that stretch reads KRFDYVDTRA…QENLSGAQPQ (221 aa). Residue glutamate 304 is part of the active site.

In the N-terminal section; belongs to the bacterial solute-binding protein 3 family. This sequence in the C-terminal section; belongs to the transglycosylase Slt family.

It is found in the cell outer membrane. The enzyme catalyses Exolytic cleavage of the (1-&gt;4)-beta-glycosidic linkage between N-acetylmuramic acid (MurNAc) and N-acetylglucosamine (GlcNAc) residues in peptidoglycan, from either the reducing or the non-reducing ends of the peptidoglycan chains, with concomitant formation of a 1,6-anhydrobond in the MurNAc residue.. In terms of biological role, murein-degrading enzyme that degrades murein glycan strands and insoluble, high-molecular weight murein sacculi, with the concomitant formation of a 1,6-anhydromuramoyl product. Lytic transglycosylases (LTs) play an integral role in the metabolism of the peptidoglycan (PG) sacculus. Their lytic action creates space within the PG sacculus to allow for its expansion as well as for the insertion of various structures such as secretion systems and flagella. In Shewanella sediminis (strain HAW-EB3), this protein is Membrane-bound lytic murein transglycosylase F.